Here is a 288-residue protein sequence, read N- to C-terminus: Putative sugar uptake protein gbs2116 (288 aa).

Helical transmembrane passes span 4–26 (LLIALIPMFAWGSIGFVSNKIGG), 33–50 (FGMTLGALLFAIIVWLFK), 55–72 (TASLWIFGILGGILWSVG), 85–107 (VSVANPLSSGAQLVGGSLVGALV), 117–134 (FILGLTALTLLVIGFYFS), 154–171 (FATIAYSTVGYISYAVLF), 181–200 (AVILPMAVGMCLGAICFMKF), 207–229 (VVVKNMITGLMWGVGNVFMLLAA), 234–256 (LAIAFSFSQLGVIISIIGGILFL), and 268–285 (VVMGILCFVMGAILLGIV).

This sequence belongs to the GRP transporter (TC 2.A.7.5) family.

It is found in the cell membrane. The polypeptide is Putative sugar uptake protein gbs2116 (Streptococcus agalactiae serotype III (strain NEM316)).